A 691-amino-acid chain; its full sequence is Methionine--tRNA ligase (691 aa).

The 'HIGH' region motif lies at 12–22; that stretch reads PYANGSFHIGH. The Zn(2+) site is built by Cys143, Cys146, Cys156, and Cys159. A 'KMSKS' region motif is present at residues 341 to 345; it reads KMSKS. Lys344 provides a ligand contact to ATP. A tRNA-binding domain is found at 585 to 691; it reads DFVKVDLRIA…PGAQPGMRIH (107 aa).

This sequence belongs to the class-I aminoacyl-tRNA synthetase family. MetG type 1 subfamily. Homodimer. The cofactor is Zn(2+).

The protein localises to the cytoplasm. It carries out the reaction tRNA(Met) + L-methionine + ATP = L-methionyl-tRNA(Met) + AMP + diphosphate. In terms of biological role, is required not only for elongation of protein synthesis but also for the initiation of all mRNA translation through initiator tRNA(fMet) aminoacylation. This Bordetella avium (strain 197N) protein is Methionine--tRNA ligase.